A 283-amino-acid chain; its full sequence is MAISAALVKELRERTGAGMMDCKKALEETNGDIELAIDNMRKSGAAKAAKKAGNIAAEGTILIKQGAGFTALLEVNCQTDFVAKDSNFLAFANQVLEVAAAGKVSVEDLKAQFEEARVALVAKIGENINVRRVEYIDGENVAAYRHGDRIGVVVTGTADEETLKHLAMHVAASKPEYVNPEDVPAEVVAKEREVQVEIAINEGKPKEIAEKMVEGRMKKFTGEVSLTGQPFIMEPKKTVGEFLKEKGATVANFIRLEVGEGIEKKEEDFAAEVAKQIAASQKA.

The interval 79–82 is involved in Mg(2+) ion dislocation from EF-Tu; that stretch reads TDFV.

The protein belongs to the EF-Ts family.

It localises to the cytoplasm. Its function is as follows. Associates with the EF-Tu.GDP complex and induces the exchange of GDP to GTP. It remains bound to the aminoacyl-tRNA.EF-Tu.GTP complex up to the GTP hydrolysis stage on the ribosome. This chain is Elongation factor Ts, found in Shewanella amazonensis (strain ATCC BAA-1098 / SB2B).